A 650-amino-acid chain; its full sequence is MSTQSLYKVPSEIAANALVNDEQYKKMYQESIVNPEGFWREHGNRIDWIKPFTKVKKTSFDDHNLFIKWFYDGTLNASANCLDRHLENNADKLAIIWEGDDAKDQRTLTYGQLHAEVCKFANALRSQGVRRGDVVTVYMPMVPEAAVAMLACARIGAIHSVVFGGFSPDSIASRVIDGNSKVVITADEGVRAGRIIPLKANIDEALSHPDVNCVEKVIVMKRTGGDINWVEGRDIWWGSLMETASEHCIPEEMGAEDPLFLLYTSGSTGNPKGVLHTTGGYMVYAAMTHEYVFDYKENEVYWCTADVGWITGHSYMVYGPLANGATVLIHEGVPNYPTPARLGEMVDRHKVNILYTAPTLIRALMAEGKEQFEGFDGSSLRIMGSVGEPINPEAWRWYNDVIGHEKCPIVDTWWQTETGGILISPLPGATDTKPGSATRPFFGVQPALVDNIGNIVEGANEGNLVILDSWPGQMRTVFGDHDRFVLTYFKTFRGMYFTGDGARRDEDGYYWITGRVDDVINVSGHRLGTAEVESALVAHELVAEAAVVGYPHDIKGQGIYAYVTLTKGSVETEELRQELRQWVRKEIGALATPDLIQWAGGLPKTRSGKIMRRFLRKIAANEVTNLGDSSTLADPAVIDTLIETRLNRSE.

Residues 191 to 194 (RAGR), threonine 311, and asparagine 335 each bind CoA. ATP contacts are provided by residues 387–389 (GEP), 411–416 (DTWWQT), aspartate 500, and arginine 515. Serine 523 provides a ligand contact to CoA. ATP is bound at residue arginine 526. Positions 537, 539, and 542 each coordinate Mg(2+). Arginine 584 is a CoA binding site. Lysine 609 is modified (N6-acetyllysine).

It belongs to the ATP-dependent AMP-binding enzyme family. It depends on Mg(2+) as a cofactor. In terms of processing, acetylated. Deacetylation by the SIR2-homolog deacetylase activates the enzyme.

The enzyme catalyses acetate + ATP + CoA = acetyl-CoA + AMP + diphosphate. Catalyzes the conversion of acetate into acetyl-CoA (AcCoA), an essential intermediate at the junction of anabolic and catabolic pathways. AcsA undergoes a two-step reaction. In the first half reaction, AcsA combines acetate with ATP to form acetyl-adenylate (AcAMP) intermediate. In the second half reaction, it can then transfer the acetyl group from AcAMP to the sulfhydryl group of CoA, forming the product AcCoA. This chain is Acetyl-coenzyme A synthetase, found in Shewanella pealeana (strain ATCC 700345 / ANG-SQ1).